Reading from the N-terminus, the 149-residue chain is Arginine repressor (149 aa).

This sequence belongs to the ArgR family.

The protein resides in the cytoplasm. It functions in the pathway amino-acid biosynthesis; L-arginine biosynthesis [regulation]. In terms of biological role, regulates arginine biosynthesis genes. The chain is Arginine repressor from Geobacillus kaustophilus (strain HTA426).